A 159-amino-acid polypeptide reads, in one-letter code: MNIRRKNRLWIACAVLAGLALTIGLVLYALRSNIDLFYTPGEILYGKRETQQMPEVGQRLRVGGMVMPGSVQRDPNSLKVTFTIYDAEGSVDVSYEGILPDLFREGQGVVVQGELEKGNHILAKEVLAKHDENYTPPEVEKAMEANHRRPASVYKDPAS.

At 1–8 the chain is on the cytoplasmic side; the sequence is MNIRRKNR. A helical; Signal-anchor for type II membrane protein transmembrane segment spans residues 9-29; that stretch reads LWIACAVLAGLALTIGLVLYA. Residues 30 to 159 are Periplasmic-facing; sequence LRSNIDLFYT…PASVYKDPAS (130 aa). Heme is bound by residues histidine 130 and tyrosine 134. The span at 132–147 shows a compositional bias: basic and acidic residues; that stretch reads ENYTPPEVEKAMEANH. A disordered region spans residues 132-159; that stretch reads ENYTPPEVEKAMEANHRRPASVYKDPAS.

This sequence belongs to the CcmE/CycJ family.

It localises to the cell inner membrane. Heme chaperone required for the biogenesis of c-type cytochromes. Transiently binds heme delivered by CcmC and transfers the heme to apo-cytochromes in a process facilitated by CcmF and CcmH. This chain is Cytochrome c-type biogenesis protein CcmE, found in Escherichia coli (strain 55989 / EAEC).